Here is an 87-residue protein sequence, read N- to C-terminus: Small ribosomal subunit protein bS20 (87 aa).

It belongs to the bacterial ribosomal protein bS20 family.

Binds directly to 16S ribosomal RNA. This is Small ribosomal subunit protein bS20 from Clostridium botulinum (strain Alaska E43 / Type E3).